We begin with the raw amino-acid sequence, 124 residues long: UPF0102 protein PP_1324 (124 aa).

This sequence belongs to the UPF0102 family.

This is UPF0102 protein PP_1324 from Pseudomonas putida (strain ATCC 47054 / DSM 6125 / CFBP 8728 / NCIMB 11950 / KT2440).